Reading from the N-terminus, the 350-residue chain is Ornithine cyclodeaminase (350 aa).

L-ornithine is bound by residues Arg-45 and Lys-69. NAD(+) is bound by residues Thr-84, Arg-112, 139-140 (AQ), Asp-161, Thr-202, 225-228 (VGGD), Lys-232, and Ser-293. Arg-112 lines the L-ornithine pocket. Asp-228 provides a ligand contact to L-ornithine. The active-site Proton donor/acceptor is Asp-228. Val-294 provides a ligand contact to L-ornithine. Residue Lys-331 coordinates NAD(+).

Belongs to the ornithine cyclodeaminase/mu-crystallin family. In terms of assembly, homodimer. It depends on NAD(+) as a cofactor.

The catalysed reaction is L-ornithine = L-proline + NH4(+). Its pathway is amino-acid biosynthesis; L-proline biosynthesis; L-proline from L-ornithine: step 1/1. In terms of biological role, catalyzes the conversion of L-ornithine into L-proline with release of ammonia. Is likely involved in the L-ornithine degradation pathway that allows P.putida to utilize this compound as sole carbon and nitrogen source. The protein is Ornithine cyclodeaminase of Pseudomonas putida (strain ATCC 47054 / DSM 6125 / CFBP 8728 / NCIMB 11950 / KT2440).